Here is a 377-residue protein sequence, read N- to C-terminus: DNA methyltransferase CcrM (377 aa).

The 103-residue stretch at 271–373 folds into the RAMA domain; that stretch reads LGKAELTVMT…LRKIIREQMA (103 aa).

It belongs to the N(4)/N(6)-methyltransferase family.

The catalysed reaction is a 2'-deoxyadenosine in DNA + S-adenosyl-L-methionine = an N(6)-methyl-2'-deoxyadenosine in DNA + S-adenosyl-L-homocysteine + H(+). Its function is as follows. A beta subtype methylase that recognizes the double-stranded sequence 5'-GANTC-3' and methylates on A-2 on both strands. Overexpression from a moderate-copy number plasmid (10-12 copies/cell) leads to enlarged, branched cells, many with 3-5 genome equivalents. Contributes to the accurate cell-cycle control of DNA replication and cellular morphology. The polypeptide is DNA methyltransferase CcrM (Brucella abortus (strain 2308)).